The following is a 279-amino-acid chain: Protein CMSS1 (279 aa).

Residues 1–10 show a composition bias toward acidic residues; it reads MADDLGDEWW. Residues 1-89 are disordered; sequence MADDLGDEWW…DVLAKSEPKP (89 aa). Positions 12 to 22 are enriched in polar residues; the sequence is NQPTGAGSSPE. Residues S19 and S24 each carry the phosphoserine modification. R167 is subject to Omega-N-methylarginine. At T212 the chain carries Phosphothreonine.

This sequence belongs to the CMS1 family.

The protein is Protein CMSS1 (CMSS1) of Homo sapiens (Human).